The following is a 588-amino-acid chain: Neuropeptide-like 1 (588 aa).

A propeptide spanning residues 1–179 is cleaved from the precursor; it reads MQCIPKKTFM…DPEVLEYSPD (179 aa). Residues 115–143 are disordered; that stretch reads NGDLPITIQERESDNDDEEKRSASSSDNV. Thr-194 carries the threonine amide modification. Ser-210, Ser-227, and Ser-244 each carry serine amide. Tyr-260 is subject to Tyrosine amide. Glu-281 carries the post-translational modification Glutamic acid 1-amide. A propeptide spanning residues 285 to 299 is cleaved from the precursor; it reads SIASLARSGDWPSVA. Tyr-318 is modified (tyrosine amide). The propeptide occupies 321 to 588; sequence SLSDDREAPS…SNSHIAPRSM (268 aa). A disordered region spans residues 342-382; that stretch reads GNSEGKENEWQATPFTVSEDLDEGKAKNRSNRRIEASQTRH.

It localises to the secreted. The protein is Neuropeptide-like 1 of Camponotus floridanus (Florida carpenter ant).